A 547-amino-acid chain; its full sequence is Membrane protein insertase YidC (547 aa).

6 helical membrane-spanning segments follow: residues 6–26 (LILV…WQKY), 328–348 (VVDY…LEAI), 351–371 (LVGN…AVFF), 425–445 (LPIL…LGAV), 459–479 (LASA…MFVQ), and 499–519 (PLIF…YWVV).

It belongs to the OXA1/ALB3/YidC family. Type 1 subfamily. As to quaternary structure, interacts with the Sec translocase complex via SecD. Specifically interacts with transmembrane segments of nascent integral membrane proteins during membrane integration.

It is found in the cell inner membrane. Functionally, required for the insertion and/or proper folding and/or complex formation of integral membrane proteins into the membrane. Involved in integration of membrane proteins that insert both dependently and independently of the Sec translocase complex, as well as at least some lipoproteins. Aids folding of multispanning membrane proteins. In Dechloromonas aromatica (strain RCB), this protein is Membrane protein insertase YidC.